Here is a 119-residue protein sequence, read N- to C-terminus: Iron-sulfur cluster insertion protein ErpA (119 aa).

Iron-sulfur cluster is bound by residues Cys47, Cys111, and Cys113.

This sequence belongs to the HesB/IscA family. In terms of assembly, homodimer. Iron-sulfur cluster serves as cofactor.

Required for insertion of 4Fe-4S clusters for at least IspG. This Alcanivorax borkumensis (strain ATCC 700651 / DSM 11573 / NCIMB 13689 / SK2) protein is Iron-sulfur cluster insertion protein ErpA.